The chain runs to 217 residues: FMN-dependent NADH:quinone oxidoreductase (217 aa).

Residues Ser-10, 17–19 (SAS), and 137–140 (SRGG) each bind FMN.

The protein belongs to the azoreductase type 1 family. In terms of assembly, homodimer. It depends on FMN as a cofactor.

The enzyme catalyses 2 a quinone + NADH + H(+) = 2 a 1,4-benzosemiquinone + NAD(+). It catalyses the reaction N,N-dimethyl-1,4-phenylenediamine + anthranilate + 2 NAD(+) = 2-(4-dimethylaminophenyl)diazenylbenzoate + 2 NADH + 2 H(+). Functionally, quinone reductase that provides resistance to thiol-specific stress caused by electrophilic quinones. Its function is as follows. Also exhibits azoreductase activity. Catalyzes the reductive cleavage of the azo bond in aromatic azo compounds to the corresponding amines. The protein is FMN-dependent NADH:quinone oxidoreductase of Streptomyces avermitilis (strain ATCC 31267 / DSM 46492 / JCM 5070 / NBRC 14893 / NCIMB 12804 / NRRL 8165 / MA-4680).